The following is a 283-amino-acid chain: D-alanine aminotransferase (283 aa).

Y31 contributes to the substrate binding site. R50 is a pyridoxal 5'-phosphate binding site. 2 residues coordinate substrate: R98 and H100. K144 functions as the Proton acceptor in the catalytic mechanism. At K144 the chain carries N6-(pyridoxal phosphate)lysine. E176 contributes to the pyridoxal 5'-phosphate binding site.

It belongs to the class-IV pyridoxal-phosphate-dependent aminotransferase family. Homodimer. Pyridoxal 5'-phosphate serves as cofactor.

The catalysed reaction is D-alanine + 2-oxoglutarate = D-glutamate + pyruvate. Its function is as follows. Acts on the D-isomers of alanine, leucine, aspartate, glutamate, aminobutyrate, norvaline and asparagine. The enzyme transfers an amino group from a substrate D-amino acid to the pyridoxal phosphate cofactor to form pyridoxamine and an alpha-keto acid in the first half-reaction. The second half-reaction is the reverse of the first, transferring the amino group from the pyridoxamine to a second alpha-keto acid to form the product D-amino acid via a ping-pong mechanism. This is an important process in the formation of D-alanine and D-glutamate, which are essential bacterial cell wall components. The polypeptide is D-alanine aminotransferase (dat) (Bacillus licheniformis).